A 794-amino-acid chain; its full sequence is Protocadherin beta-6 (794 aa).

A signal peptide spans 1–27 (MMQTKVQNKKRQVAFFILLMLWGEVGS). The Extracellular segment spans residues 28–688 (ESIQYSVLEE…AQADLLTVYL (661 aa)). Cadherin domains are found at residues 34–132 (VLEE…APEF), 137–241 (MLLK…VPEF), 246–345 (YEAQ…APEL), 350–449 (FISP…APAF), and 454–559 (YTLF…SPFV). Asn46 carries an N-linked (GlcNAc...) asparagine glycan. A disulfide bond links Cys95 and Cys101. N-linked (GlcNAc...) asparagine glycosylation occurs at Asn183. An N-linked (GlcNAc...) asparagine glycan is attached at Asn416. Asn565 carries an N-linked (GlcNAc...) asparagine glycan. The region spanning 566 to 669 (GSAPCTELVP…LVDGFSQPYL (104 aa)) is the Cadherin 6 domain. Residues 689-709 (VVALASVSSLFLFSVLLFVAV) traverse the membrane as a helical segment. Residues 710-794 (RLCRRSRAAS…PTSRNSFPFS (85 aa)) are Cytoplasmic-facing. The tract at residues 773-794 (PPQGTEREMEETPTSRNSFPFS) is disordered. Residues 784–794 (TPTSRNSFPFS) are compositionally biased toward polar residues.

In terms of assembly, forms homodimers in trans (molecules expressed by two different cells). Forms promiscuous heterodimers in cis (at the plasma membrane of the same cell) with other protocadherins.

Its subcellular location is the cell membrane. Calcium-dependent cell-adhesion protein involved in cells self-recognition and non-self discrimination. Thereby, it is involved in the establishment and maintenance of specific neuronal connections in the brain. The sequence is that of Protocadherin beta-6 from Pan troglodytes (Chimpanzee).